The chain runs to 525 residues: MALDIHAHRILILDFGSQYTQLIARRVREIGVYCELHPFDMDEDAIREFAPKGVILAGGPESVHEANSPRCPQAVFDLGVPVFGICYGMQTMAEQLGGKVEGSELREFGYARVDVVGKSRLLDGIEDHIDADGLFGLDVWMSHGDKVTKMPSDFHILASTPSCPIAGMFNDERAYYGVQFHPEVTHTKQGGRILSRFVLDICGCEALWTPSKIAEDAIANIRAQVGTDNVLLGLSGGVDSSVVAALLHKAIGDQLTCVFVDNGLLRLHEGEQVMAMFAENMGVKVIRANAEDQFLNNLAGEADPEKKRKIIGRTFIDVFDAESCKLDNIKYLAQGTIYPDVIESAGAKSGKAHVIKSHHNVGGLPEEMNLKLVEPLRELFKDEVRRLGLELGLPYDMVYRHPFPGPGLGVRILGEVKKEYADLLRRADHIFIEELRKADWYHKVSQAFVVFQPVKSVGVVGDGRRYAWVVALRAVETIDFMTARWAHLPYELLETVSGRIINEIEGISRVTYDVSSKPPATIEWE.

Positions 9–207 (RILILDFGSQ…VLDICGCEAL (199 aa)) constitute a Glutamine amidotransferase type-1 domain. Catalysis depends on Cys-86, which acts as the Nucleophile. Active-site residues include His-181 and Glu-183. In terms of domain architecture, GMPS ATP-PPase spans 208-400 (WTPSKIAEDA…LGLPYDMVYR (193 aa)). Position 235 to 241 (235 to 241 (SGGVDSS)) interacts with ATP.

In terms of assembly, homodimer.

It carries out the reaction XMP + L-glutamine + ATP + H2O = GMP + L-glutamate + AMP + diphosphate + 2 H(+). The protein operates within purine metabolism; GMP biosynthesis; GMP from XMP (L-Gln route): step 1/1. In terms of biological role, catalyzes the synthesis of GMP from XMP. This is GMP synthase [glutamine-hydrolyzing] from Pseudomonas fluorescens (strain Pf0-1).